The sequence spans 44 residues: Phosphatase RapE inhibitor (44 aa).

2 consecutive propeptides follow at residues 1–30 (MKSK…MKEA) and 36–44 (LAPTHEFLV).

It belongs to the Phr family. In terms of processing, contains a predicted signal peptide cleavage site in the N-terminal region, however the propeptide is probably only subject to processing events at the ends of the mature peptide.

The protein resides in the secreted. Its subcellular location is the cytoplasm. Functionally, signaling molecule involved in the regulation of sporulation. Secreted during production, but the mature peptide acts intracellularly, indicating that it needs to be imported into the cell to function. Inhibitor of the RapE phosphatase activity. Does not inhibit the phosphatase activity of RapA and RapB. Probably plays a dispensable role in the overall context of sporulation initiation. The sequence is that of Phosphatase RapE inhibitor (phrE) from Bacillus subtilis (strain 168).